We begin with the raw amino-acid sequence, 168 residues long: Cytochrome c oxidase subunit 2 (168 aa).

Over 1–3 (MVD) the chain is Cytoplasmic. A helical transmembrane segment spans residues 4–38 (EHKAHKAILAYEKGWLAFSLAMLFVFIALIAYTLA). At 39–168 (THTAGVIPAG…NMFGTIVVKE (130 aa)) the chain is on the periplasmic side. Cu cation contacts are provided by histidine 114, cysteine 149, cysteine 153, and histidine 157.

Belongs to the cytochrome c oxidase subunit 2 family.

It is found in the cell membrane. It carries out the reaction 4 Fe(II)-[cytochrome c] + O2 + 8 H(+)(in) = 4 Fe(III)-[cytochrome c] + 2 H2O + 4 H(+)(out). Subunits I and II form the functional core of the enzyme complex. Electrons originating in cytochrome c are transferred via heme a and Cu(A) to the binuclear center formed by heme a3 and Cu(B). This is Cytochrome c oxidase subunit 2 (cbaB) from Thermus thermophilus (strain ATCC 27634 / DSM 579 / HB8).